We begin with the raw amino-acid sequence, 150 residues long: Plasmin C (150 aa).

The first 14 residues, 1-14 (MRSFFLLCALVAVC), serve as a signal peptide directing secretion.

This chain is Plasmin C (PLSC), found in Physarum polycephalum (Slime mold).